The primary structure comprises 147 residues: Large ribosomal subunit protein uL15 (147 aa).

Residues 1-11 (MKLHDLRPAKD) are compositionally biased toward basic and acidic residues. Positions 1–57 (MKLHDLRPAKDAKKKRKRVGRGTGSGRGFTSGRGSKGQNARSGGGVRPTFEGGQTPL) are disordered. Positions 21–35 (RGTGSGRGFTSGRGS) are enriched in gly residues.

The protein belongs to the universal ribosomal protein uL15 family. Part of the 50S ribosomal subunit.

Binds to the 23S rRNA. The sequence is that of Large ribosomal subunit protein uL15 from Halothermothrix orenii (strain H 168 / OCM 544 / DSM 9562).